A 672-amino-acid chain; its full sequence is Ubiquitin carboxyl-terminal hydrolase 19 (672 aa).

The chain crosses the membrane as a helical span at residues 11–31 (NSFTQLILTLFFVSIGLLYFV). Positions 64, 67, 75, 78, 84, 88, 97, and 101 each coordinate Zn(2+). An MYND-type zinc finger spans residues 64 to 101 (CSVCGKATTKKCSRCKSVRYCSAACQTSDWKSGHKLKC). Positions 174 to 480 (CGLTNCGNSC…RAYMLLYSRV (307 aa)) constitute a USP domain. The active-site Nucleophile is Cys183. The Proton acceptor role is filled by His439. The disordered stretch occupies residues 484 to 672 (PSNLRSEESQ…HSDTEMIDAQ (189 aa)). The segment covering 488-499 (RSEESQDEKKTD) has biased composition (basic and acidic residues). Residues 500 to 527 (TLNTESNQDGSVESSGVGTNDTSVSSLC) are compositionally biased toward polar residues. Basic and acidic residues-rich tracts occupy residues 533 to 543 (HSEDPEYEKES) and 553 to 594 (EEGK…KEDP). Over residues 606–615 (LDITTPSPSA) the composition is skewed to polar residues. Over residues 623-666 (ENERSDTESKPLEKEHSDTESNKPLEKEHLDSESKPLEKEHSDT) the composition is skewed to basic and acidic residues.

Belongs to the peptidase C19 family.

It localises to the membrane. It carries out the reaction Thiol-dependent hydrolysis of ester, thioester, amide, peptide and isopeptide bonds formed by the C-terminal Gly of ubiquitin (a 76-residue protein attached to proteins as an intracellular targeting signal).. Its function is as follows. Recognizes and hydrolyzes the peptide bond at the C-terminal Gly of ubiquitin. Involved in the processing of poly-ubiquitin precursors as well as that of ubiquitinated proteins. The chain is Ubiquitin carboxyl-terminal hydrolase 19 (UBP19) from Arabidopsis thaliana (Mouse-ear cress).